The chain runs to 245 residues: 1-(5-phosphoribosyl)-5-[(5-phosphoribosylamino)methylideneamino] imidazole-4-carboxamide isomerase (245 aa).

Asp-12 (proton acceptor) is an active-site residue. The Proton donor role is filled by Asp-131.

This sequence belongs to the HisA/HisF family.

The protein localises to the cytoplasm. It carries out the reaction 1-(5-phospho-beta-D-ribosyl)-5-[(5-phospho-beta-D-ribosylamino)methylideneamino]imidazole-4-carboxamide = 5-[(5-phospho-1-deoxy-D-ribulos-1-ylimino)methylamino]-1-(5-phospho-beta-D-ribosyl)imidazole-4-carboxamide. The protein operates within amino-acid biosynthesis; L-histidine biosynthesis; L-histidine from 5-phospho-alpha-D-ribose 1-diphosphate: step 4/9. The polypeptide is 1-(5-phosphoribosyl)-5-[(5-phosphoribosylamino)methylideneamino] imidazole-4-carboxamide isomerase (Thermobifida fusca (strain YX)).